The chain runs to 510 residues: Bifunctional purine biosynthesis protein PurH (510 aa).

The region spanning 1-143 (MTKRALISVS…KNHDAVLVLV (143 aa)) is the MGS-like domain.

This sequence belongs to the PurH family.

It catalyses the reaction (6R)-10-formyltetrahydrofolate + 5-amino-1-(5-phospho-beta-D-ribosyl)imidazole-4-carboxamide = 5-formamido-1-(5-phospho-D-ribosyl)imidazole-4-carboxamide + (6S)-5,6,7,8-tetrahydrofolate. The catalysed reaction is IMP + H2O = 5-formamido-1-(5-phospho-D-ribosyl)imidazole-4-carboxamide. Its pathway is purine metabolism; IMP biosynthesis via de novo pathway; 5-formamido-1-(5-phospho-D-ribosyl)imidazole-4-carboxamide from 5-amino-1-(5-phospho-D-ribosyl)imidazole-4-carboxamide (10-formyl THF route): step 1/1. The protein operates within purine metabolism; IMP biosynthesis via de novo pathway; IMP from 5-formamido-1-(5-phospho-D-ribosyl)imidazole-4-carboxamide: step 1/1. The chain is Bifunctional purine biosynthesis protein PurH from Deinococcus radiodurans (strain ATCC 13939 / DSM 20539 / JCM 16871 / CCUG 27074 / LMG 4051 / NBRC 15346 / NCIMB 9279 / VKM B-1422 / R1).